The following is a 75-amino-acid chain: Metallothionein-like protein 1 (75 aa).

The protein belongs to the metallothionein superfamily. Type 15 family.

Its function is as follows. Metallothioneins have a high content of cysteine residues that bind various heavy metals. This chain is Metallothionein-like protein 1, found in Cicer arietinum (Chickpea).